Consider the following 412-residue polypeptide: Argininosuccinate synthase (412 aa).

ATP-binding positions include 16-24 and Ala44; that span reads AYSGGLDTS. 2 residues coordinate L-citrulline: Tyr96 and Ser101. Gly126 is a binding site for ATP. Thr128, Asn132, and Asp133 together coordinate L-aspartate. Asn132 contributes to the L-citrulline binding site. Arg136, Ser185, Ser194, Glu270, and Tyr282 together coordinate L-citrulline.

Belongs to the argininosuccinate synthase family. Type 1 subfamily. In terms of assembly, homotetramer.

The protein resides in the cytoplasm. The catalysed reaction is L-citrulline + L-aspartate + ATP = 2-(N(omega)-L-arginino)succinate + AMP + diphosphate + H(+). Its pathway is amino-acid biosynthesis; L-arginine biosynthesis; L-arginine from L-ornithine and carbamoyl phosphate: step 2/3. This Shewanella baltica (strain OS195) protein is Argininosuccinate synthase.